Reading from the N-terminus, the 153-residue chain is UPF0768 protein PB2B2.18 (153 aa).

Belongs to the UPF0768 family.

This is UPF0768 protein PB2B2.18 from Schizosaccharomyces pombe (strain 972 / ATCC 24843) (Fission yeast).